Here is a 115-residue protein sequence, read N- to C-terminus: Large ribosomal subunit protein bL20 (115 aa).

Belongs to the bacterial ribosomal protein bL20 family.

Binds directly to 23S ribosomal RNA and is necessary for the in vitro assembly process of the 50S ribosomal subunit. It is not involved in the protein synthesizing functions of that subunit. The polypeptide is Large ribosomal subunit protein bL20 (Chlorobium phaeobacteroides (strain DSM 266 / SMG 266 / 2430)).